Here is a 118-residue protein sequence, read N- to C-terminus: Ribulose bisphosphate carboxylase small subunit 2 (118 aa).

Belongs to the RuBisCO small chain family. As to quaternary structure, heterohexadecamer of 8 large and 8 small subunits.

Functionally, ruBisCO catalyzes two reactions: the carboxylation of D-ribulose 1,5-bisphosphate, the primary event in carbon dioxide fixation, as well as the oxidative fragmentation of the pentose substrate. Both reactions occur simultaneously and in competition at the same active site. Although the small subunit is not catalytic it is essential for maximal activity. This is Ribulose bisphosphate carboxylase small subunit 2 from Acidithiobacillus ferrooxidans (Thiobacillus ferrooxidans).